A 333-amino-acid chain; its full sequence is 4-hydroxy-3-methylbut-2-enyl diphosphate reductase (333 aa).

Position 33 (Cys-33) interacts with [4Fe-4S] cluster. (2E)-4-hydroxy-3-methylbut-2-enyl diphosphate is bound by residues His-62 and His-95. Dimethylallyl diphosphate is bound by residues His-62 and His-95. Isopentenyl diphosphate is bound by residues His-62 and His-95. Cys-117 is a [4Fe-4S] cluster binding site. His-145 serves as a coordination point for (2E)-4-hydroxy-3-methylbut-2-enyl diphosphate. Position 145 (His-145) interacts with dimethylallyl diphosphate. Residue His-145 participates in isopentenyl diphosphate binding. The Proton donor role is filled by Glu-147. Thr-186 is a (2E)-4-hydroxy-3-methylbut-2-enyl diphosphate binding site. Cys-216 provides a ligand contact to [4Fe-4S] cluster. Positions 244, 245, 246, and 289 each coordinate (2E)-4-hydroxy-3-methylbut-2-enyl diphosphate. Residues Ser-244, Ser-245, Asn-246, and Ser-289 each contribute to the dimethylallyl diphosphate site. Isopentenyl diphosphate is bound by residues Ser-244, Ser-245, Asn-246, and Ser-289.

This sequence belongs to the IspH family. Requires [4Fe-4S] cluster as cofactor.

The catalysed reaction is isopentenyl diphosphate + 2 oxidized [2Fe-2S]-[ferredoxin] + H2O = (2E)-4-hydroxy-3-methylbut-2-enyl diphosphate + 2 reduced [2Fe-2S]-[ferredoxin] + 2 H(+). It catalyses the reaction dimethylallyl diphosphate + 2 oxidized [2Fe-2S]-[ferredoxin] + H2O = (2E)-4-hydroxy-3-methylbut-2-enyl diphosphate + 2 reduced [2Fe-2S]-[ferredoxin] + 2 H(+). It participates in isoprenoid biosynthesis; dimethylallyl diphosphate biosynthesis; dimethylallyl diphosphate from (2E)-4-hydroxy-3-methylbutenyl diphosphate: step 1/1. Its pathway is isoprenoid biosynthesis; isopentenyl diphosphate biosynthesis via DXP pathway; isopentenyl diphosphate from 1-deoxy-D-xylulose 5-phosphate: step 6/6. Functionally, catalyzes the conversion of 1-hydroxy-2-methyl-2-(E)-butenyl 4-diphosphate (HMBPP) into a mixture of isopentenyl diphosphate (IPP) and dimethylallyl diphosphate (DMAPP). Acts in the terminal step of the DOXP/MEP pathway for isoprenoid precursor biosynthesis. This is 4-hydroxy-3-methylbut-2-enyl diphosphate reductase from Corynebacterium diphtheriae (strain ATCC 700971 / NCTC 13129 / Biotype gravis).